A 328-amino-acid polypeptide reads, in one-letter code: GTP 3',8-cyclase (328 aa).

Residues 9-229 (GFGRDVRYLR…DNGLNTGGPA (221 aa)) enclose the Radical SAM core domain. Residue arginine 18 participates in GTP binding. 2 residues coordinate [4Fe-4S] cluster: cysteine 25 and cysteine 29. Residue tyrosine 31 participates in S-adenosyl-L-methionine binding. Residue cysteine 32 coordinates [4Fe-4S] cluster. Arginine 60 lines the GTP pocket. Glycine 64 is an S-adenosyl-L-methionine binding site. Threonine 94 contacts GTP. Serine 118 contacts S-adenosyl-L-methionine. Lysine 154 is a binding site for GTP. Methionine 188 is an S-adenosyl-L-methionine binding site. [4Fe-4S] cluster-binding residues include cysteine 252 and cysteine 255. 257–259 (RVR) contacts GTP. A [4Fe-4S] cluster-binding site is contributed by cysteine 269.

Belongs to the radical SAM superfamily. MoaA family. Monomer and homodimer. The cofactor is [4Fe-4S] cluster.

The enzyme catalyses GTP + AH2 + S-adenosyl-L-methionine = (8S)-3',8-cyclo-7,8-dihydroguanosine 5'-triphosphate + 5'-deoxyadenosine + L-methionine + A + H(+). It functions in the pathway cofactor biosynthesis; molybdopterin biosynthesis. Functionally, catalyzes the cyclization of GTP to (8S)-3',8-cyclo-7,8-dihydroguanosine 5'-triphosphate. This chain is GTP 3',8-cyclase, found in Rhodobacter capsulatus (Rhodopseudomonas capsulata).